We begin with the raw amino-acid sequence, 36 residues long: MDSRLLIVLIPVLAAASWAVYNIGRVALQQFRKMTS.

Over 1–4 the chain is Lumenal; it reads MDSR. Residues 5 to 23 traverse the membrane as a helical segment; that stretch reads LLIVLIPVLAAASWAVYNI. Over 24–36 the chain is Stromal; sequence GRVALQQFRKMTS.

This sequence belongs to the PsbY family. In terms of assembly, PSII is composed of 1 copy each of membrane proteins PsbA, PsbB, PsbC, PsbD, PsbE, PsbF, PsbH, PsbI, PsbJ, PsbK, PsbL, PsbM, PsbT, PsbX, PsbY, PsbZ, Psb30/Ycf12, at least 3 peripheral proteins of the oxygen-evolving complex and a large number of cofactors. It forms dimeric complexes.

It is found in the plastid. The protein resides in the chloroplast thylakoid membrane. In terms of biological role, loosely associated component of the core of photosystem II (PSII), it is not always seen in crystals. PSII is a light-driven water plastoquinone oxidoreductase, using light energy to abstract electrons from H(2)O, generating a proton gradient subsequently used for ATP formation. The protein is Photosystem II reaction center protein Y of Porphyra purpurea (Red seaweed).